Here is a 486-residue protein sequence, read N- to C-terminus: Hexokinase-2 (486 aa).

Serine 15 bears the Phosphoserine mark. The Hexokinase domain maps to 21–469; it reads KELMQQIENF…SGAGAAVIAA (449 aa). Residue threonine 38 is modified to Phosphothreonine. A hexokinase small subdomain region spans residues 75 to 209; that stretch reads TGKESGDFLA…NIPIEVVALI (135 aa). Residues 86-91 and lysine 111 each bind ATP; that span reads DLGGTN. The residue at position 158 (serine 158) is a Phosphoserine. Substrate contacts are provided by residues serine 158, 175-176, 210-211, and asparagine 237; these read TK and ND. Residues 210–458 form a hexokinase large subdomain region; the sequence is NDTTGTLVAS…YPIKIVPAED (249 aa). Serine 245 carries the phosphoserine modification. Glutamate 269 serves as a coordination point for substrate. Serine 272 carries the phosphoserine modification. Glutamate 302 is a substrate binding site. Residues 307–308, 344–348, and 419–423 each bind ATP; these read GY, TSYPA, and SVYNR.

The protein belongs to the hexokinase family. Homodimer.

The catalysed reaction is a D-hexose + ATP = a D-hexose 6-phosphate + ADP + H(+). The enzyme catalyses D-fructose + ATP = D-fructose 6-phosphate + ADP + H(+). It carries out the reaction D-glucose + ATP = D-glucose 6-phosphate + ADP + H(+). It participates in carbohydrate metabolism; hexose metabolism. The protein operates within carbohydrate degradation; glycolysis; D-glyceraldehyde 3-phosphate and glycerone phosphate from D-glucose: step 1/4. Its activity is regulated as follows. Subject to allosteric control. Substrate inhibition by ATP. Catalyzes the phosphorylation of hexose, such as D-glucose and D-fructose, to hexose 6-phosphate (D-glucose 6-phosphate and D-fructose 6-phosphate, respectively). Mediates the initial step of glycolysis by catalyzing phosphorylation of D-glucose to D-glucose 6-phosphate. This chain is Hexokinase-2 (HXK2), found in Saccharomyces cerevisiae (strain ATCC 204508 / S288c) (Baker's yeast).